Consider the following 387-residue polypeptide: Peptostreptococcal albumin-binding protein (387 aa).

A signal peptide spans 1 to 26; it reads MKLNKKLLMAALAGAIVVGGGVNTFA. Positions 122–155 are disordered; it reads LFDKHELGGLGKDKGPGRFDENGWENNEHGYETR. The interval 213-265 is GA module; the sequence is TIDQWLLKNAKEDAIAELKKAGITSDFYFNAINKAKTVEEVNALKNEILKAHA. Residues 266-360 are disordered; the sequence is GKEVNPSTPE…EKAALPEAGR (95 aa). The segment covering 270–282 has biased composition (polar residues); the sequence is NPSTPEVTPSVPQ. The segment covering 298 to 360 has biased composition (basic and acidic residues); the sequence is GTKEDGKKEN…EKAALPEAGR (63 aa). The LPXTG sorting signal motif lies at 355-359; it reads LPEAG. Ala-358 carries the post-translational modification Pentaglycyl murein peptidoglycan amidated alanine. A propeptide spans 359–387 (removed by sortase); it reads GRRKAEILTLAAASLSSVAGAFISLKKRK.

The protein resides in the secreted. It localises to the cell wall. In terms of biological role, binds serum albumin. This Finegoldia magna (Peptostreptococcus magnus) protein is Peptostreptococcal albumin-binding protein (pab).